Here is a 238-residue protein sequence, read N- to C-terminus: Lipoprotein-releasing system ATP-binding protein LolD (238 aa).

In terms of domain architecture, ABC transporter spans 6–238 (LVCQGIRKVY…RSSLAQEMEA (233 aa)). 42–49 (GSSGSGKS) provides a ligand contact to ATP.

This sequence belongs to the ABC transporter superfamily. Lipoprotein translocase (TC 3.A.1.125) family. The complex is composed of two ATP-binding proteins (LolD) and two transmembrane proteins (LolC and LolE).

It localises to the cell inner membrane. Its function is as follows. Part of the ABC transporter complex LolCDE involved in the translocation of mature outer membrane-directed lipoproteins, from the inner membrane to the periplasmic chaperone, LolA. Responsible for the formation of the LolA-lipoprotein complex in an ATP-dependent manner. The protein is Lipoprotein-releasing system ATP-binding protein LolD of Aliivibrio fischeri (strain ATCC 700601 / ES114) (Vibrio fischeri).